A 184-amino-acid polypeptide reads, in one-letter code: MIGLFKVKEKQREQAQNATRGGASVKKQSAGELRLHKDISELNLPSSCSISFPNGKDDLMNFEVSIKPDDGYYHNGTFVFTFQVSPVYPHEAPKVKCKTKVYHPNIDLEGNVCLNILREDWKPVLNINTVIYGLFHLFTEPNSEDPLNHDAAAVLRDNPKLFETNVRRAMTGGYVGQTFFPRCI.

Residues 30-175 (AGELRLHKDI…VRRAMTGGYV (146 aa)) form the UBC core domain. Catalysis depends on cysteine 113, which acts as the Glycyl thioester intermediate.

It belongs to the ubiquitin-conjugating enzyme family. UBC12 subfamily. Interacts with RBX1. In terms of tissue distribution, expressed in shoot, root and floral meristems, and in vascular tissues of leaves.

It participates in protein modification; protein neddylation. Functionally, accepts the ubiquitin-like protein NEDD8/RUB1 from the ECR1-AXR1 E1 complex and catalyzes its covalent attachment to other proteins. In Arabidopsis thaliana (Mouse-ear cress), this protein is NEDD8-conjugating enzyme Ubc12 (RCE1).